The sequence spans 298 residues: Elongation factor Ts (298 aa).

Residues 79-82 (TDFV) form an involved in Mg(2+) ion dislocation from EF-Tu region.

It belongs to the EF-Ts family.

It is found in the cytoplasm. Its function is as follows. Associates with the EF-Tu.GDP complex and induces the exchange of GDP to GTP. It remains bound to the aminoacyl-tRNA.EF-Tu.GTP complex up to the GTP hydrolysis stage on the ribosome. This chain is Elongation factor Ts, found in Cereibacter sphaeroides (strain ATCC 17029 / ATH 2.4.9) (Rhodobacter sphaeroides).